The sequence spans 401 residues: Imidazolonepropionase (401 aa).

Positions 66 and 68 each coordinate Fe(3+). Zn(2+)-binding residues include H66 and H68. 4-imidazolone-5-propanoate is bound by residues R75, Y138, and H171. N-formimidoyl-L-glutamate is bound at residue Y138. H236 lines the Fe(3+) pocket. H236 lines the Zn(2+) pocket. Residue Q239 coordinates 4-imidazolone-5-propanoate. Residue D311 coordinates Fe(3+). D311 contributes to the Zn(2+) binding site. Positions 313 and 315 each coordinate N-formimidoyl-L-glutamate. T316 is a binding site for 4-imidazolone-5-propanoate.

The protein belongs to the metallo-dependent hydrolases superfamily. HutI family. It depends on Zn(2+) as a cofactor. The cofactor is Fe(3+).

It localises to the cytoplasm. It carries out the reaction 4-imidazolone-5-propanoate + H2O = N-formimidoyl-L-glutamate. The protein operates within amino-acid degradation; L-histidine degradation into L-glutamate; N-formimidoyl-L-glutamate from L-histidine: step 3/3. Its function is as follows. Catalyzes the hydrolytic cleavage of the carbon-nitrogen bond in imidazolone-5-propanoate to yield N-formimidoyl-L-glutamate. It is the third step in the universal histidine degradation pathway. This Acinetobacter baumannii (strain ACICU) protein is Imidazolonepropionase.